A 285-amino-acid polypeptide reads, in one-letter code: HTH-type transcriptional regulator MurR (285 aa).

The HTH rpiR-type domain maps to 1-77 (MLYLTKIRNA…MALIGEYSAS (77 aa)). Residues 37–56 (SRKMAKQLGISQSSIVKFAQ) constitute a DNA-binding region (H-T-H motif). The 141-residue stretch at 128-268 (IIEVISKAPF…FVGLVQLNDV (141 aa)) folds into the SIS domain.

As to quaternary structure, homotetramer.

The protein operates within amino-sugar metabolism; N-acetylmuramate degradation [regulation]. In terms of biological role, represses the expression of the murPQ operon involved in the uptake and degradation of N-acetylmuramic acid (MurNAc). Binds to two adjacent inverted repeats within the operator region. MurNAc 6-phosphate, the substrate of MurQ, is the specific inducer that weakens binding of MurR to the operator. The polypeptide is HTH-type transcriptional regulator MurR (Escherichia coli O7:K1 (strain IAI39 / ExPEC)).